Consider the following 1342-residue polypeptide: DNA-directed RNA polymerase subunit beta (1342 aa).

The protein belongs to the RNA polymerase beta chain family. As to quaternary structure, the RNAP catalytic core consists of 2 alpha, 1 beta, 1 beta' and 1 omega subunit. When a sigma factor is associated with the core the holoenzyme is formed, which can initiate transcription.

The enzyme catalyses RNA(n) + a ribonucleoside 5'-triphosphate = RNA(n+1) + diphosphate. Its function is as follows. DNA-dependent RNA polymerase catalyzes the transcription of DNA into RNA using the four ribonucleoside triphosphates as substrates. In Photorhabdus laumondii subsp. laumondii (strain DSM 15139 / CIP 105565 / TT01) (Photorhabdus luminescens subsp. laumondii), this protein is DNA-directed RNA polymerase subunit beta.